The following is a 317-amino-acid chain: Melanocyte-stimulating hormone receptor (317 aa).

Topologically, residues 1-37 (MAVQGSQRRLLGSLNSTPTAIPQLGLAANQTGAWCLE) are extracellular. N-linked (GlcNAc...) asparagine glycosylation occurs at Asn-29. A helical membrane pass occupies residues 38-63 (VSIPDGLFLSLGLVSLVENVLVVATI). Topologically, residues 64-72 (AKNRNLHSP) are cytoplasmic. A helical membrane pass occupies residues 73-93 (MYCFICCLALSDLLVSGGNVL). At 94–118 (ETAVILLLEAGALAARAAVVQQLDN) the chain is on the extracellular side. Residues 119–140 (VIDVITCSSMLSSLCFLGAIAV) traverse the membrane as a helical segment. The Cytoplasmic segment spans residues 141-163 (DRYISIFYALRYHSIVTLPRARR). Residues 164 to 183 (AIAAIWVASVLFSTLFIAYY) traverse the membrane as a helical segment. Residues 184–191 (DHAAVLLC) are Extracellular-facing. Residues 192 to 211 (LVVFFLAMLVLMAVLYVHML) traverse the membrane as a helical segment. Topologically, residues 212–240 (ARACQHAQGIARLHKRQRPVHQGFGLKGA) are cytoplasmic. A helical membrane pass occupies residues 241 to 266 (VTLTILLGIFFLCWGPFFLHLTLIVL). Topologically, residues 267 to 279 (CPQHPTCSCIFKN) are extracellular. The chain crosses the membrane as a helical span at residues 280-300 (FNLFLALIICNAIIDPLIYAF). Topologically, residues 301–317 (RSQELRRTLKEVLTCSW) are cytoplasmic. Cys-315 carries S-palmitoyl cysteine lipidation.

This sequence belongs to the G-protein coupled receptor 1 family. Interacts with MGRN1, but does not undergo MGRN1-mediated ubiquitination; this interaction competes with GNAS-binding and thus inhibits agonist-induced cAMP production. Interacts with OPN3; the interaction results in a decrease in MC1R-mediated cAMP signaling and ultimately a decrease in melanin production in melanocytes.

It localises to the cell membrane. In terms of biological role, receptor for MSH (alpha, beta and gamma) and ACTH. The activity of this receptor is mediated by G proteins which activate adenylate cyclase. Mediates melanogenesis, the production of eumelanin (black/brown) and phaeomelanin (red/yellow), via regulation of cAMP signaling in melanocytes. The protein is Melanocyte-stimulating hormone receptor (MC1R) of Pongo pygmaeus (Bornean orangutan).